The primary structure comprises 448 residues: B-cell lymphoma 3 protein homolog (448 aa).

The segment at 1–54 (MPRCPAGAMDEGPVDLRTRPKGTPGAALPLRKRPLRPASPEPATTRSPAGPLDA) is disordered. Position 39 is a phosphoserine (Ser-39). 7 ANK repeats span residues 129 to 161 (DGDT…REVD), 166 to 195 (LRQT…SPMA), 199 to 228 (HGQT…SGSV), 236 to 265 (EGLT…DIDA), 270 to 299 (SGRS…NVNA), 303 to 332 (SGSS…DSGL), and 333 to 362 (KNCH…RAAS). The segment at 356–448 (KASRAASGSQ…VPPSPAPGSS (93 aa)) is disordered. Residues 361 to 376 (ASGSQPEPSPDQSATN) are compositionally biased toward polar residues. Ser-369 carries the phosphoserine modification. Low complexity predominate over residues 377–398 (SPESSSRLSSNGLQSSPSSSPS). 2 positions are modified to phosphoserine; by GSK3: Ser-396 and Ser-400. Positions 411–423 (TPQNFFLPTTSTP) are enriched in polar residues. Low complexity predominate over residues 425-436 (FLPFPGVLRGPG). The span at 437–448 (RPVPPSPAPGSS) shows a compositional bias: pro residues.

Component of a complex consisting of the NF-kappa-B p52-p52 homodimer and BCL3. Component of a complex consisting of the NF-kappa-B p50-p50 homodimer and BCL3. Interacts with N4BP2, COPS5 and PIR. Interacts with CYLD. Post-translationally, polyubiquitinated. Ubiquitination via 'Lys-63'-linked ubiquitin chains is required for nuclear accumulation. Deubiquitinated by CYLD, which acts on 'Lys-63'-linked ubiquitin chains. Deubiquitination by CYLD prevents nuclear accumulation. In terms of processing, activated by phosphorylation.

It is found in the nucleus. The protein localises to the cytoplasm. The protein resides in the perinuclear region. Its function is as follows. Contributes to the regulation of transcriptional activation of NF-kappa-B target genes. In the cytoplasm, inhibits the nuclear translocation of the NF-kappa-B p50 subunit. In the nucleus, acts as a transcriptional activator that promotes transcription of NF-kappa-B target genes. Contributes to the regulation of cell proliferation. This chain is B-cell lymphoma 3 protein homolog (Bcl3), found in Mus musculus (Mouse).